Reading from the N-terminus, the 274-residue chain is Putative pyruvate, phosphate dikinase regulatory protein 1 (274 aa).

ADP is bound at residue 149–156; the sequence is GISRTSKT.

Belongs to the pyruvate, phosphate/water dikinase regulatory protein family. PDRP subfamily.

The enzyme catalyses N(tele)-phospho-L-histidyl/L-threonyl-[pyruvate, phosphate dikinase] + ADP = N(tele)-phospho-L-histidyl/O-phospho-L-threonyl-[pyruvate, phosphate dikinase] + AMP + H(+). The catalysed reaction is N(tele)-phospho-L-histidyl/O-phospho-L-threonyl-[pyruvate, phosphate dikinase] + phosphate + H(+) = N(tele)-phospho-L-histidyl/L-threonyl-[pyruvate, phosphate dikinase] + diphosphate. In terms of biological role, bifunctional serine/threonine kinase and phosphorylase involved in the regulation of the pyruvate, phosphate dikinase (PPDK) by catalyzing its phosphorylation/dephosphorylation. The protein is Putative pyruvate, phosphate dikinase regulatory protein 1 of Listeria welshimeri serovar 6b (strain ATCC 35897 / DSM 20650 / CCUG 15529 / CIP 8149 / NCTC 11857 / SLCC 5334 / V8).